Consider the following 79-residue polypeptide: Phosphoribosylformylglycinamidine synthase subunit PurS (79 aa).

It belongs to the PurS family. Homodimer. Part of the FGAM synthase complex composed of 1 PurL, 1 PurQ and 2 PurS subunits.

The protein localises to the cytoplasm. It catalyses the reaction N(2)-formyl-N(1)-(5-phospho-beta-D-ribosyl)glycinamide + L-glutamine + ATP + H2O = 2-formamido-N(1)-(5-O-phospho-beta-D-ribosyl)acetamidine + L-glutamate + ADP + phosphate + H(+). Its pathway is purine metabolism; IMP biosynthesis via de novo pathway; 5-amino-1-(5-phospho-D-ribosyl)imidazole from N(2)-formyl-N(1)-(5-phospho-D-ribosyl)glycinamide: step 1/2. In terms of biological role, part of the phosphoribosylformylglycinamidine synthase complex involved in the purines biosynthetic pathway. Catalyzes the ATP-dependent conversion of formylglycinamide ribonucleotide (FGAR) and glutamine to yield formylglycinamidine ribonucleotide (FGAM) and glutamate. The FGAM synthase complex is composed of three subunits. PurQ produces an ammonia molecule by converting glutamine to glutamate. PurL transfers the ammonia molecule to FGAR to form FGAM in an ATP-dependent manner. PurS interacts with PurQ and PurL and is thought to assist in the transfer of the ammonia molecule from PurQ to PurL. This Mycobacterium leprae (strain TN) protein is Phosphoribosylformylglycinamidine synthase subunit PurS.